Consider the following 386-residue polypeptide: Methionyl-tRNA formyltransferase, mitochondrial (386 aa).

Belongs to the Fmt family.

The protein resides in the mitochondrion. The catalysed reaction is L-methionyl-tRNA(fMet) + (6R)-10-formyltetrahydrofolate = N-formyl-L-methionyl-tRNA(fMet) + (6S)-5,6,7,8-tetrahydrofolate + H(+). Its function is as follows. Methionyl-tRNA formyltransferase that formylates methionyl-tRNA in mitochondria and is crucial for translation initiation. This is Methionyl-tRNA formyltransferase, mitochondrial (Mtfmt) from Mus musculus (Mouse).